The primary structure comprises 108 residues: Small ribosomal subunit protein uS10 (108 aa).

The protein belongs to the universal ribosomal protein uS10 family. As to quaternary structure, part of the 30S ribosomal subunit.

In terms of biological role, involved in the binding of tRNA to the ribosomes. This is Small ribosomal subunit protein uS10 from Ehrlichia canis (strain Jake).